A 280-amino-acid chain; its full sequence is Phosphatidylserine decarboxylase proenzyme (280 aa).

Residues Asp-88, His-145, and Ser-249 each act as charge relay system; for autoendoproteolytic cleavage activity in the active site. The active-site Schiff-base intermediate with substrate; via pyruvic acid; for decarboxylase activity is the Ser-249. Residue Ser-249 is modified to Pyruvic acid (Ser); by autocatalysis.

Belongs to the phosphatidylserine decarboxylase family. PSD-B subfamily. Prokaryotic type I sub-subfamily. In terms of assembly, heterodimer of a large membrane-associated beta subunit and a small pyruvoyl-containing alpha subunit. Requires pyruvate as cofactor. Is synthesized initially as an inactive proenzyme. Formation of the active enzyme involves a self-maturation process in which the active site pyruvoyl group is generated from an internal serine residue via an autocatalytic post-translational modification. Two non-identical subunits are generated from the proenzyme in this reaction, and the pyruvate is formed at the N-terminus of the alpha chain, which is derived from the carboxyl end of the proenzyme. The autoendoproteolytic cleavage occurs by a canonical serine protease mechanism, in which the side chain hydroxyl group of the serine supplies its oxygen atom to form the C-terminus of the beta chain, while the remainder of the serine residue undergoes an oxidative deamination to produce ammonia and the pyruvoyl prosthetic group on the alpha chain. During this reaction, the Ser that is part of the protease active site of the proenzyme becomes the pyruvoyl prosthetic group, which constitutes an essential element of the active site of the mature decarboxylase.

It localises to the cell membrane. The catalysed reaction is a 1,2-diacyl-sn-glycero-3-phospho-L-serine + H(+) = a 1,2-diacyl-sn-glycero-3-phosphoethanolamine + CO2. It functions in the pathway phospholipid metabolism; phosphatidylethanolamine biosynthesis; phosphatidylethanolamine from CDP-diacylglycerol: step 2/2. Its function is as follows. Catalyzes the formation of phosphatidylethanolamine (PtdEtn) from phosphatidylserine (PtdSer). In Chromobacterium violaceum (strain ATCC 12472 / DSM 30191 / JCM 1249 / CCUG 213 / NBRC 12614 / NCIMB 9131 / NCTC 9757 / MK), this protein is Phosphatidylserine decarboxylase proenzyme.